A 204-amino-acid chain; its full sequence is Large ribosomal subunit protein bL25 (204 aa).

Positions 1–20 (MSETYELKAETRDRVGKGSS) are disordered.

It belongs to the bacterial ribosomal protein bL25 family. CTC subfamily. Part of the 50S ribosomal subunit; part of the 5S rRNA/L5/L18/L25 subcomplex. Contacts the 5S rRNA. Binds to the 5S rRNA independently of L5 and L18.

This is one of the proteins that binds to the 5S RNA in the ribosome where it forms part of the central protuberance. The protein is Large ribosomal subunit protein bL25 of Rhizobium meliloti (strain 1021) (Ensifer meliloti).